Here is a 238-residue protein sequence, read N- to C-terminus: Pyridoxine 5'-phosphate synthase (238 aa).

3-amino-2-oxopropyl phosphate is bound by residues Asn7 and Arg18. The active-site Proton acceptor is His43. 1-deoxy-D-xylulose 5-phosphate contacts are provided by Arg45 and His50. Residue Glu70 is the Proton acceptor of the active site. Thr100 is a 1-deoxy-D-xylulose 5-phosphate binding site. The active-site Proton donor is the His190. Residues Asp191 and 213-214 contribute to the 3-amino-2-oxopropyl phosphate site; that span reads GH.

This sequence belongs to the PNP synthase family. In terms of assembly, homooctamer; tetramer of dimers.

It is found in the cytoplasm. It carries out the reaction 3-amino-2-oxopropyl phosphate + 1-deoxy-D-xylulose 5-phosphate = pyridoxine 5'-phosphate + phosphate + 2 H2O + H(+). It functions in the pathway cofactor biosynthesis; pyridoxine 5'-phosphate biosynthesis; pyridoxine 5'-phosphate from D-erythrose 4-phosphate: step 5/5. In terms of biological role, catalyzes the complicated ring closure reaction between the two acyclic compounds 1-deoxy-D-xylulose-5-phosphate (DXP) and 3-amino-2-oxopropyl phosphate (1-amino-acetone-3-phosphate or AAP) to form pyridoxine 5'-phosphate (PNP) and inorganic phosphate. This is Pyridoxine 5'-phosphate synthase from Parabacteroides distasonis (strain ATCC 8503 / DSM 20701 / CIP 104284 / JCM 5825 / NCTC 11152).